Here is a 406-residue protein sequence, read N- to C-terminus: MKVGFFLLKFPLSSETFVLNQITAFIDMGFEVEILALQKGDTQNTHAAWTKYNLAARTRWLQDEPTGKVAKLRHRASQTLRGIHRKNTWQALNLKRYGAESRNLILSAICGQVATPFRADVFIAHFGPAGVTAAKLRELGVIRGKIATIFHGIDISSREVLNHYTPEYQQLFRRGDLMLPISDLWAGRLQKMGCPREKIAVSRMGVDMTRFSPRPVKAPATPLEIISVARLTEKKGLHVAIEACRQLKEQGVAFRYRILGIGPWERRLRTLIEQYQLEDVVEMPGFKPSHEVKAMLDDADVFLLPSVTGADGDMEGIPVALMEAMAVGIPVVSTLHSGIPELVEADKSGWLVPENDARALAQRLAAFSQLDTDELAPVVKRAREKVEHDFNQQVINRELASLLQAL.

This sequence belongs to the glycosyltransferase group 1 family. Glycosyltransferase 4 subfamily.

Its pathway is slime biogenesis; slime polysaccharide biosynthesis. The polypeptide is Putative colanic acid biosynthesis glycosyltransferase WcaL (wcaL) (Escherichia coli (strain K12)).